Consider the following 422-residue polypeptide: Elongation factor 1-alpha (422 aa).

A tr-type G domain is found at 5-221 (KPHQNLAVIG…NDLPEPQPPT (217 aa)). Residues 14-21 (GHVDHGKS) form a G1 region. Residue 14-21 (GHVDHGKS) coordinates GTP. Ser-21 serves as a coordination point for Mg(2+). Residues 70–74 (GVTID) form a G2 region. A G3 region spans residues 91-94 (DCPG). GTP-binding positions include 91–95 (DCPGH) and 146–149 (NKMD). The tract at residues 146–149 (NKMD) is G4. Residues 185-187 (SAF) form a G5 region.

The protein belongs to the TRAFAC class translation factor GTPase superfamily. Classic translation factor GTPase family. EF-Tu/EF-1A subfamily.

It is found in the cytoplasm. The catalysed reaction is GTP + H2O = GDP + phosphate + H(+). Functionally, GTP hydrolase that promotes the GTP-dependent binding of aminoacyl-tRNA to the A-site of ribosomes during protein biosynthesis. The chain is Elongation factor 1-alpha from Natronomonas pharaonis (strain ATCC 35678 / DSM 2160 / CIP 103997 / JCM 8858 / NBRC 14720 / NCIMB 2260 / Gabara) (Halobacterium pharaonis).